Here is a 357-residue protein sequence, read N- to C-terminus: DNA replication and repair protein RecF (357 aa).

ATP is bound at residue 30–37 (GANGSGKT).

The protein belongs to the RecF family.

The protein resides in the cytoplasm. In terms of biological role, the RecF protein is involved in DNA metabolism; it is required for DNA replication and normal SOS inducibility. RecF binds preferentially to single-stranded, linear DNA. It also seems to bind ATP. The polypeptide is DNA replication and repair protein RecF (Salmonella agona (strain SL483)).